The sequence spans 427 residues: Gamma-glutamyl phosphate reductase (427 aa).

Belongs to the gamma-glutamyl phosphate reductase family.

It localises to the cytoplasm. The catalysed reaction is L-glutamate 5-semialdehyde + phosphate + NADP(+) = L-glutamyl 5-phosphate + NADPH + H(+). Its pathway is amino-acid biosynthesis; L-proline biosynthesis; L-glutamate 5-semialdehyde from L-glutamate: step 2/2. Functionally, catalyzes the NADPH-dependent reduction of L-glutamate 5-phosphate into L-glutamate 5-semialdehyde and phosphate. The product spontaneously undergoes cyclization to form 1-pyrroline-5-carboxylate. The protein is Gamma-glutamyl phosphate reductase of Allorhizobium ampelinum (strain ATCC BAA-846 / DSM 112012 / S4) (Agrobacterium vitis (strain S4)).